We begin with the raw amino-acid sequence, 313 residues long: Ribonuclease HIII (313 aa).

In terms of domain architecture, RNase H type-2 spans 98 to 313 (YNCIGSDEAG…REKALKLIKK (216 aa)). Residues Asp-104, Glu-105, and Asp-208 each coordinate a divalent metal cation.

It belongs to the RNase HII family. RnhC subfamily. Requires Mn(2+) as cofactor. It depends on Mg(2+) as a cofactor.

The protein resides in the cytoplasm. It catalyses the reaction Endonucleolytic cleavage to 5'-phosphomonoester.. In terms of biological role, endonuclease that specifically degrades the RNA of RNA-DNA hybrids. The chain is Ribonuclease HIII from Macrococcus caseolyticus (strain JCSC5402) (Macrococcoides caseolyticum).